Consider the following 216-residue polypeptide: MTATRAPRAARGRVPLDQRGFDFSRPDDIVCGVDEAGRGPLAGPVVAAAVILDPAQPIEGLDDSKALSAKKRDALYDLIVARSRAYCVASASVDEIDTLNILHATMLAMKRAVEGLSLMPTLAQIDGNRCPTLMVRAEAIVSGDALVPSISAASILAKVTRDRMLVELHARHPVYGFDVHAGYGTAKHLAALREHGPCEAHRRSFAPVRAALDLIR.

The region spanning 28–216 (DIVCGVDEAG…PVRAALDLIR (189 aa)) is the RNase H type-2 domain. A divalent metal cation is bound by residues Asp34, Glu35, and Asp126.

The protein belongs to the RNase HII family. Mn(2+) serves as cofactor. Requires Mg(2+) as cofactor.

The protein resides in the cytoplasm. The catalysed reaction is Endonucleolytic cleavage to 5'-phosphomonoester.. In terms of biological role, endonuclease that specifically degrades the RNA of RNA-DNA hybrids. The chain is Ribonuclease HII from Burkholderia vietnamiensis (strain G4 / LMG 22486) (Burkholderia cepacia (strain R1808)).